A 353-amino-acid chain; its full sequence is 4-hydroxy-2-oxovalerate aldolase 2 (353 aa).

The 253-residue stretch at 14–266 folds into the Pyruvate carboxyltransferase domain; the sequence is VRMTDTSLRD…KTGIDFFDIA (253 aa). Residue 22 to 23 participates in substrate binding; sequence RD. Position 23 (Asp23) interacts with Mn(2+). The active-site Proton acceptor is the His26. Substrate is bound by residues Ser176 and His205. Mn(2+) contacts are provided by His205 and His207. Tyr296 contacts substrate.

The protein belongs to the 4-hydroxy-2-oxovalerate aldolase family.

The catalysed reaction is (S)-4-hydroxy-2-oxopentanoate = acetaldehyde + pyruvate. The protein is 4-hydroxy-2-oxovalerate aldolase 2 of Mycobacterium sp. (strain JLS).